The chain runs to 154 residues: Nucleoside diphosphate kinase A2 (154 aa).

Lys-13, Phe-61, Arg-89, Thr-95, Arg-106, and Asn-116 together coordinate ATP. Residue His-119 is the Pros-phosphohistidine intermediate of the active site.

This sequence belongs to the NDK family. Mg(2+) is required as a cofactor.

Its subcellular location is the cytoplasm. It carries out the reaction a 2'-deoxyribonucleoside 5'-diphosphate + ATP = a 2'-deoxyribonucleoside 5'-triphosphate + ADP. The enzyme catalyses a ribonucleoside 5'-diphosphate + ATP = a ribonucleoside 5'-triphosphate + ADP. Functionally, major role in the synthesis of nucleoside triphosphates other than ATP. The ATP gamma phosphate is transferred to the NDP beta phosphate via a ping-pong mechanism, using a phosphorylated active-site intermediate. The chain is Nucleoside diphosphate kinase A2 from Xenopus laevis (African clawed frog).